A 349-amino-acid polypeptide reads, in one-letter code: Green-sensitive opsin-3 (349 aa).

Residues 1–36 (MNGTEGNNFYIPMSNRTGLVRSPYEYPQYYLAEPWQ) are Extracellular-facing. N-linked (GlcNAc...) asparagine glycans are attached at residues Asn2 and Asn15. Residues 37–61 (FKLLAVYMFFLMCFGFPINGLTLVV) traverse the membrane as a helical segment. The Cytoplasmic segment spans residues 62–73 (TAQHKKLRQPLN). The chain crosses the membrane as a helical span at residues 74 to 99 (FILVNLAVAGTIMVCFGFTVTFYTAI). Over 100–113 (NGYFVLGPTGCAIE) the chain is Extracellular. Cys110 and Cys187 are oxidised to a cystine. Residues 114-133 (GFMATLGGQISLWSLVVLAI) traverse the membrane as a helical segment. The Cytoplasmic portion of the chain corresponds to 134–152 (ERYIVVCKPMGSFKFSSNH). The chain crosses the membrane as a helical span at residues 153–176 (AFAGIGFTWIMALSCAAPPLVGWS). Residues 177 to 202 (RYIPEGMQCSCGPDYYTLNPDYNNES) lie on the Extracellular side of the membrane. An N-linked (GlcNAc...) asparagine glycan is attached at Asn200. A helical transmembrane segment spans residues 203–230 (YVLYMFCCHFIFPVTTIFFTYGRLVCTV). At 231–252 (KAAAAQQQESESTQKAEREVTR) the chain is on the cytoplasmic side. The helical transmembrane segment at 253-276 (MVILMVLGFLVAWTPYASVAAWIF) threads the bilayer. Residues 277-284 (FNRGAAFS) lie on the Extracellular side of the membrane. The chain crosses the membrane as a helical span at residues 285-309 (AQFMAVPAFFSKSSSIFNPIIYVLL). Lys296 is modified (N6-(retinylidene)lysine). Residues 310–349 (NKQFRNCMLTTLFCGKNPLGDDESSTVSTSKTEVSSVSPA) lie on the Cytoplasmic side of the membrane. The tract at residues 329–349 (GDDESSTVSTSKTEVSSVSPA) is disordered. The segment covering 334-349 (STVSTSKTEVSSVSPA) has biased composition (low complexity).

The protein belongs to the G-protein coupled receptor 1 family. Opsin subfamily. Phosphorylated on some or all of the serine and threonine residues present in the C-terminal region.

The protein localises to the membrane. Its function is as follows. Visual pigments are the light-absorbing molecules that mediate vision. They consist of an apoprotein, opsin, covalently linked to cis-retinal. The sequence is that of Green-sensitive opsin-3 (opn1mw3) from Danio rerio (Zebrafish).